The sequence spans 968 residues: RNA polymerase-associated protein RapA (968 aa).

In terms of domain architecture, Helicase ATP-binding spans 164 to 334 (DVGRRHAPRV…FARLRLLDPN (171 aa)). 177 to 184 (DEVGLGKT) lines the ATP pocket. Residues 280–283 (DEAH) carry the DEAH box motif. In terms of domain architecture, Helicase C-terminal spans 490 to 685 (RVEWLMGYLT…ALKAQLEQGR (196 aa)).

The protein belongs to the SNF2/RAD54 helicase family. RapA subfamily. As to quaternary structure, interacts with the RNAP. Has a higher affinity for the core RNAP than for the holoenzyme. Its ATPase activity is stimulated by binding to RNAP.

Functionally, transcription regulator that activates transcription by stimulating RNA polymerase (RNAP) recycling in case of stress conditions such as supercoiled DNA or high salt concentrations. Probably acts by releasing the RNAP, when it is trapped or immobilized on tightly supercoiled DNA. Does not activate transcription on linear DNA. Probably not involved in DNA repair. In Salmonella choleraesuis (strain SC-B67), this protein is RNA polymerase-associated protein RapA.